Consider the following 241-residue polypeptide: Histone H1-II (241 aa).

Positions 1–10 are enriched in basic and acidic residues; it reads MASDAPEVKA. Disordered regions lie at residues 1 to 27 and 89 to 241; these read MASD…THPP and NSYK…AKKA. Residues 11 to 20 are compositionally biased toward basic residues; sequence PKAKTQKKPK. Residues 24-95 form the H15 domain; the sequence is THPPYIQMVT…KVKNSYKLSD (72 aa). Positions 99-111 are enriched in basic residues; it reads SKAKAAAKPKAAP. 3 tandem repeats follow at residues 111-116, 117-122, and 123-128. An 8 X 6 AA repeats of P-K-K-A-[AK]-A region spans residues 111–217; the sequence is PKKAAAPKKA…KAATPKKAKA (107 aa). The segment covering 129–155 has biased composition (basic and acidic residues); it reads PKKEGEKKAVKPKSEKKAAKPKTEKKP. Basic residues-rich tracts occupy residues 156–184 and 194–241; these read KAAK…KATP and AAPK…AKKA. Residues 183-186 mediate DNA binding; that stretch reads TPKK. A run of 5 repeats spans residues 184–189, 190–195, 196–201, 204–209, and 212–217. 2 DNA-binding regions span residues 203–206 and 211–214; these read TPKK.

Belongs to the histone H1/H5 family.

Its subcellular location is the nucleus. It localises to the chromosome. In terms of biological role, histones H1 are necessary for the condensation of nucleosome chains into higher-order structures. In Volvox carteri (Green alga), this protein is Histone H1-II (H1-II).